We begin with the raw amino-acid sequence, 495 residues long: MFS transporter prlL (495 aa).

The interval 1-24 (MAQSFANEHDPAKRAEERGHVGTI) is disordered. Basic and acidic residues predominate over residues 7–20 (NEHDPAKRAEERGH). The next 11 membrane-spanning stretches (helical) occupy residues 102–122 (IALMIFFLAYGLFEVPSNVLL), 130–150 (WIAILMFSWGAISMGLAGAHN), 159–179 (FLLGIFEAGLFPGLVYYLTFW), 189–209 (VAFILASATLAGAFGGAIAYA), 224–244 (WLFIIEGAPSCVSALFVLFFL), 292–312 (LWAHYLIYFGISTPFSSLSLF), 329–349 (LMTVPPYAVAYVVQILVSWSA), 356–376 (GLHSAASATVGACGFLASAVL), 386–406 (GCLIVAAAGAFACIPPLLGWL), 418–438 (LAIALNIGLGGAPGQIAGVWI), and 449–469 (PTGHWVNAGLLFFVAVACVAL).

Belongs to the major facilitator superfamily.

Its subcellular location is the cell membrane. Functionally, efflux pump that might be required for efficient secretion of pyrrolocin or other secondary metabolies produced by the pyrrolocin gene cluster. The protein is MFS transporter prlL of Fungal sp. (strain NRRL 50135).